We begin with the raw amino-acid sequence, 291 residues long: Small ribosomal subunit protein uS2 (291 aa).

The protein belongs to the universal ribosomal protein uS2 family.

This is Small ribosomal subunit protein uS2 from Lawsonia intracellularis (strain PHE/MN1-00).